We begin with the raw amino-acid sequence, 225 residues long: Ribonuclease 3 (225 aa).

Residues Phe4–Asn133 form the RNase III domain. Glu46 contacts Mg(2+). The active site involves Asp50. Residues Asn119 and Glu122 each coordinate Mg(2+). Glu122 is a catalytic residue. The region spanning Asp158–Lys225 is the DRBM domain.

The protein belongs to the ribonuclease III family. In terms of assembly, homodimer. Requires Mg(2+) as cofactor.

It is found in the cytoplasm. It catalyses the reaction Endonucleolytic cleavage to 5'-phosphomonoester.. Functionally, digests double-stranded RNA. Involved in the processing of primary rRNA transcript to yield the immediate precursors to the large and small rRNAs (23S and 16S). Processes some mRNAs, and tRNAs when they are encoded in the rRNA operon. Processes pre-crRNA and tracrRNA of type II CRISPR loci if present in the organism. The sequence is that of Ribonuclease 3 from Rickettsia felis (strain ATCC VR-1525 / URRWXCal2) (Rickettsia azadi).